Consider the following 93-residue polypeptide: uncharacterized protein (93 aa).

This is an uncharacterized protein from Saccharomyces cerevisiae (strain ATCC 204508 / S288c) (Baker's yeast).